Reading from the N-terminus, the 315-residue chain is Glutathione synthetase (315 aa).

One can recognise an ATP-grasp domain in the interval 125 to 310 (KLFTAWFSDL…ITGMLMDAIE (186 aa)). Arginine 256 carries N-beta-linked (GlcNAc) arginine glycosylation. Residues glutamate 281 and asparagine 283 each contribute to the Mg(2+) site.

Belongs to the prokaryotic GSH synthase family. Mg(2+) serves as cofactor. Mn(2+) is required as a cofactor. Glycosylation at Arg-256 by NleB enhances the glutathione synthetase activity, leading to an increase in glutathione production. Glycosylation may promote C.rodentium survival in oxidative stress conditions.

The enzyme catalyses gamma-L-glutamyl-L-cysteine + glycine + ATP = glutathione + ADP + phosphate + H(+). The protein operates within sulfur metabolism; glutathione biosynthesis; glutathione from L-cysteine and L-glutamate: step 2/2. This chain is Glutathione synthetase, found in Citrobacter rodentium.